Here is a 330-residue protein sequence, read N- to C-terminus: Complement factor H-related protein 1 (330 aa).

Residues 1–18 (MWLLVSVILISRISSVGG) form the signal peptide. 5 consecutive Sushi domains span residues 22–84 (FCDF…PKCL), 85–142 (RLCF…KCRS), 145–203 (TSCV…QCKD), 206–264 (GKCG…KCLH), and 273–329 (MENY…TCAK). Intrachain disulfides connect Cys-23/Cys-72, Cys-55/Cys-83, Cys-87/Cys-129, Cys-114/Cys-140, Cys-147/Cys-190, Cys-176/Cys-201, Cys-208/Cys-251, Cys-237/Cys-262, Cys-266/Cys-317, and Cys-300/Cys-327. Asn-126 is a glycosylation site (N-linked (GlcNAc...) asparagine). Asn-194 carries an N-linked (GlcNAc...) asparagine glycan.

In terms of assembly, head-to-tail homodimer and heterodimer with CFHR2 or CFHR5. As to quaternary structure, (Microbial infection) Interacts with C.albicans GPD2; the interaction is direct and leads to the degradation of C3. Post-translationally, N-glycosylated. Two forms are observed; one with a single side chain and the other with two. As to expression, expressed by the liver and secreted in plasma.

The protein localises to the secreted. In terms of biological role, involved in complement regulation. The dimerized forms have avidity for tissue-bound complement fragments and efficiently compete with the physiological complement inhibitor CFH. Can associate with lipoproteins and may play a role in lipid metabolism. The sequence is that of Complement factor H-related protein 1 (CFHR1) from Homo sapiens (Human).